Here is a 135-residue protein sequence, read N- to C-terminus: NADH-quinone oxidoreductase subunit K (135 aa).

3 helical membrane passes run 33-53 (VLGL…FAIG), 63-83 (FLFM…AFVV), and 95-115 (IMFI…LAIL).

It belongs to the complex I subunit 4L family. As to quaternary structure, NDH-1 is composed of 14 different subunits. Subunits NuoA, H, J, K, L, M, N constitute the membrane sector of the complex.

It localises to the cell inner membrane. The enzyme catalyses a quinone + NADH + 5 H(+)(in) = a quinol + NAD(+) + 4 H(+)(out). Functionally, NDH-1 shuttles electrons from NADH, via FMN and iron-sulfur (Fe-S) centers, to quinones in the respiratory chain. The immediate electron acceptor for the enzyme in this species is believed to be ubiquinone. Couples the redox reaction to proton translocation (for every two electrons transferred, four hydrogen ions are translocated across the cytoplasmic membrane), and thus conserves the redox energy in a proton gradient. The sequence is that of NADH-quinone oxidoreductase subunit K from Psychrobacter arcticus (strain DSM 17307 / VKM B-2377 / 273-4).